We begin with the raw amino-acid sequence, 254 residues long: Imidazole glycerol phosphate synthase subunit HisF (254 aa).

Residues D13 and D132 contribute to the active site.

This sequence belongs to the HisA/HisF family. In terms of assembly, heterodimer of HisH and HisF.

Its subcellular location is the cytoplasm. The catalysed reaction is 5-[(5-phospho-1-deoxy-D-ribulos-1-ylimino)methylamino]-1-(5-phospho-beta-D-ribosyl)imidazole-4-carboxamide + L-glutamine = D-erythro-1-(imidazol-4-yl)glycerol 3-phosphate + 5-amino-1-(5-phospho-beta-D-ribosyl)imidazole-4-carboxamide + L-glutamate + H(+). It functions in the pathway amino-acid biosynthesis; L-histidine biosynthesis; L-histidine from 5-phospho-alpha-D-ribose 1-diphosphate: step 5/9. In terms of biological role, IGPS catalyzes the conversion of PRFAR and glutamine to IGP, AICAR and glutamate. The HisF subunit catalyzes the cyclization activity that produces IGP and AICAR from PRFAR using the ammonia provided by the HisH subunit. This Sulfurovum sp. (strain NBC37-1) protein is Imidazole glycerol phosphate synthase subunit HisF.